The primary structure comprises 2172 residues: Non-reducing polyketide synthase dpfgA (2172 aa).

The segment at glutamate 74 to aspartate 181 is N-terminal acylcarrier protein transacylase domain (SAT). The Ketosynthase family 3 (KS3) domain occupies aspartate 389 to glutamine 783. Residues cysteine 529, histidine 665, and histidine 706 each act as for beta-ketoacyl synthase activity in the active site. The segment at valine 895–glutamine 1197 is malonyl-CoA:ACP transacylase (MAT) domain. The For acyl/malonyl transferase activity role is filled by serine 981. Positions proline 1270–cysteine 1403 are N-terminal hotdog fold. The PKS/mFAS DH domain maps to proline 1270–glutamine 1581. The segment at glycine 1277–isoleucine 1575 is product template (PT) domain. A C-terminal hotdog fold region spans residues serine 1428–glutamine 1581. Disordered regions lie at residues aspartate 1608 to phenylalanine 1631 and tyrosine 1650 to aspartate 1672. Residues tyrosine 1650 to serine 1668 are compositionally biased toward low complexity. One can recognise a Carrier domain in the interval serine 1671–aspartate 1747. At serine 1707 the chain carries O-(pantetheine 4'-phosphoryl)serine. Positions aspartate 1751 to glutamine 1773 are disordered. Residues glutamate 1975 to threonine 2155 form a methyltransferase (CMeT) domain region.

It participates in secondary metabolite biosynthesis; terpenoid biosynthesis. Its function is as follows. Non-reducing polyketide synthase; part of the gene cluster that mediates the biosynthesis of diterpenoid pyrones. The first step of the pathway is the synthesis of the alpha-pyrone moiety by the polyketide synthase dpfgA via condensation of one acetyl-CoA starter unit with 3 malonyl-CoA units and 2 methylations. The alpha-pyrone is then combined with geranylgeranyl pyrophosphate (GGPP) formed by the GGPP synthase dpfgD through the action of the prenyltransferase dpfgC to yield a linear alpha-pyrone diterpenoid. Subsequent steps in the diterpenoid pyrone biosynthetic pathway involve the decalin core formation, which is initiated by the epoxidation of the C10-C11 olefin by the FAD-dependent oxidoreductase dpfgE, and is followed by a cyclization cascade catalyzed by the terpene cyclase dpfgB. The short chain dehydrogenase/reductase dpfgG then oxidizes the 8S hydroxy group to a ketone and the short chain dehydrogenase/reductase dpfgH reduces the ketone to the 8R hydroxy group to yield higginsianin B. Higginsianin B is further methylated by the methyltransferase dpfgI to produce the intermediate named FDDP B. The cytochrome P450 monooxygenase dfgpJ then catalyzes a three-step oxidation at C-27 to generate a carboxylic acid as well as C-26 hydroxylation. Finally, methyltransferase dpfgK methylates the carboxylic acid generated by dpfgJ, yielding the final diterpenoid pyrones from the pathway which were named FDDP D and FDDP E. This chain is Non-reducing polyketide synthase dpfgA, found in Gibberella zeae (strain ATCC MYA-4620 / CBS 123657 / FGSC 9075 / NRRL 31084 / PH-1) (Wheat head blight fungus).